The primary structure comprises 194 residues: Fibroblast growth factor 7 (194 aa).

The first 31 residues, 1–31 (MRKWILTWILPSLLYRSCFHIICLVGTISLA), serve as a signal peptide directing secretion. A glycan (N-linked (GlcNAc...) asparagine) is linked at Asn-45.

It belongs to the heparin-binding growth factors family. In terms of assembly, interacts with FGFBP1. Interacts with FGFR2. Affinity between fibroblast growth factors (FGFs) and their receptors is increased by heparan sulfate glycosaminoglycans that function as coreceptors.

In terms of biological role, plays an important role in the regulation of embryonic development, cell proliferation and cell differentiation. Required for normal branching morphogenesis. Growth factor active on keratinocytes. Possible major paracrine effector of normal epithelial cell proliferation. This Ovis aries (Sheep) protein is Fibroblast growth factor 7 (FGF7).